Consider the following 390-residue polypeptide: Chorismate synthase 2 (390 aa).

Arg-39 and Arg-45 together coordinate NADP(+). FMN-binding positions include 132 to 134 (RSS), 253 to 254 (NA), Gly-298, 313 to 317 (KPIPT), and Arg-339.

Belongs to the chorismate synthase family. Homotetramer. FMNH2 serves as cofactor.

The catalysed reaction is 5-O-(1-carboxyvinyl)-3-phosphoshikimate = chorismate + phosphate. Its pathway is metabolic intermediate biosynthesis; chorismate biosynthesis; chorismate from D-erythrose 4-phosphate and phosphoenolpyruvate: step 7/7. In terms of biological role, catalyzes the anti-1,4-elimination of the C-3 phosphate and the C-6 proR hydrogen from 5-enolpyruvylshikimate-3-phosphate (EPSP) to yield chorismate, which is the branch point compound that serves as the starting substrate for the three terminal pathways of aromatic amino acid biosynthesis. This reaction introduces a second double bond into the aromatic ring system. The polypeptide is Chorismate synthase 2 (Bacillus thuringiensis (strain Al Hakam)).